We begin with the raw amino-acid sequence, 429 residues long: Transcriptional adapter 3 (429 aa).

A coiled-coil region spans residues 41–70 (IEELDTLQLELETLLSSASRRLRALEEQRQ). Disordered regions lie at residues 86–132 (KLEK…TKVQ), 208–257 (EERR…PFGP), and 274–308 (PMED…HTRS). Composition is skewed to basic and acidic residues over residues 208–221 (EERR…DKKK) and 230–249 (LDAK…HEPP). Positions 364–404 (LLKLAREEMRKQELRQRVRVADNEVMEAFRRIMAARQKKRT) form a coiled coil.

Belongs to the NGG1 family.

The protein resides in the nucleus. Functions as a component of the PCAF complex. The PCAF complex is capable of efficiently acetylating histones in a nucleosomal context. The chain is Transcriptional adapter 3 (tada3) from Danio rerio (Zebrafish).